We begin with the raw amino-acid sequence, 291 residues long: MAVGKEILTKIRSVQNTQKITKAMQMVSTSKMRKTQERMRLARPYAEKVRMVMSHLAQTNTDHGIPLLESHREIRRVGFILITSDKGLCGGLNANVLKKFLAQVQEYRNQGIEEEIVCLGSKGLMACQSIGLNVVASAVNLGDTPKMEMLLGPLTELFQRYEKHEIDRIHLVYSGFVNTMRQEPRMEVLLPIGENVIGDSAPKSPFSWEYRYEPTALAVLEYLVRRYLESVVYQALSDNMASEQAARMVAMKAATDNAGNAIKELRLVYNKSRQAAITTELSEIVAGAAAV.

The protein belongs to the ATPase gamma chain family. In terms of assembly, F-type ATPases have 2 components, CF(1) - the catalytic core - and CF(0) - the membrane proton channel. CF(1) has five subunits: alpha(3), beta(3), gamma(1), delta(1), epsilon(1). CF(0) has three main subunits: a, b and c.

The protein resides in the cell inner membrane. Produces ATP from ADP in the presence of a proton gradient across the membrane. The gamma chain is believed to be important in regulating ATPase activity and the flow of protons through the CF(0) complex. This chain is ATP synthase gamma chain, found in Neisseria meningitidis serogroup C (strain 053442).